A 393-amino-acid chain; its full sequence is MTRVVLAAAYRTPIGVFGGAFKDVPAYDLGATLIEHIIKETGLNPSEINEVIIGNVLQAGQGQNPARIAAMKGGLPETVPVFTVNKVCGSGLKSIQLAYQSIVTGENDIVLAGGMENMSQSPMLVNNSRFGFKMGHQSMVDSMVYDGLTDVFNQYHMGITAENLVEQYGISREEQDTFAVNSQKKAANAQQNGGFDSEIVPVSIPQRKGEPIVVTKDEGVRENVSVEKLSRLRPAFKKDGTVTAGNASGINDGAAMMLVMSEDKAKELNIEPLAVLDGFGSHGVDPSIMGIAPVGAVEKALKRSKKELSDIDVFELNEAFAAQSLAVDRELKLPPEKVNVKGGAIALGHPIGASGARVLVTLLHQLNDEVETGLTSLCIGGGQAIAAVVSKYK.

The active-site Acyl-thioester intermediate is Cys-88. Residues His-349 and Cys-378 each act as proton acceptor in the active site.

The protein belongs to the thiolase-like superfamily. Thiolase family.

Its subcellular location is the cytoplasm. The enzyme catalyses 2 acetyl-CoA = acetoacetyl-CoA + CoA. This is Probable acetyl-CoA acyltransferase from Staphylococcus aureus (strain bovine RF122 / ET3-1).